The sequence spans 562 residues: Bacillolysin (562 aa).

An N-terminal signal peptide occupies residues 1–24 (MKKKKQALKVLLSVGILSSSFAFA). A propeptide spans 25–245 (HTSSAAPNNV…KQAAKPAAKP (221 aa)) (activation peptide). Ca(2+)-binding residues include D303, D305, and D384. H388 contributes to the Zn(2+) binding site. E389 is a catalytic residue. The Zn(2+) site is built by H392 and E412. Positions 423, 429, 431, 433, 436, 439, 440, and 446 each coordinate Ca(2+). The active-site Proton donor is the H477.

The protein belongs to the peptidase M4 family. It depends on Ca(2+) as a cofactor. The cofactor is Zn(2+).

The protein localises to the secreted. The enzyme catalyses Similar, but not identical, to that of thermolysin.. Its function is as follows. Extracellular zinc metalloprotease. This is Bacillolysin from Priestia megaterium (strain ATCC 14581 / DSM 32 / CCUG 1817 / JCM 2506 / NBRC 15308 / NCIMB 9376 / NCTC 10342 / NRRL B-14308 / VKM B-512 / Ford 19) (Bacillus megaterium).